The chain runs to 463 residues: Bifunctional protein HldE (463 aa).

A ribokinase region spans residues 1–315 (MKKILVIGDL…LILNQTHPKI (315 aa)). 191-194 (NRAE) provides a ligand contact to ATP. The active site involves D260. The cytidylyltransferase stretch occupies residues 334–463 (FTNGCFDLLH…IEKIKRTHND (130 aa)).

It in the N-terminal section; belongs to the carbohydrate kinase PfkB family. In the C-terminal section; belongs to the cytidylyltransferase family. In terms of assembly, homodimer.

The catalysed reaction is D-glycero-beta-D-manno-heptose 7-phosphate + ATP = D-glycero-beta-D-manno-heptose 1,7-bisphosphate + ADP + H(+). The enzyme catalyses D-glycero-beta-D-manno-heptose 1-phosphate + ATP + H(+) = ADP-D-glycero-beta-D-manno-heptose + diphosphate. Its pathway is nucleotide-sugar biosynthesis; ADP-L-glycero-beta-D-manno-heptose biosynthesis; ADP-L-glycero-beta-D-manno-heptose from D-glycero-beta-D-manno-heptose 7-phosphate: step 1/4. It functions in the pathway nucleotide-sugar biosynthesis; ADP-L-glycero-beta-D-manno-heptose biosynthesis; ADP-L-glycero-beta-D-manno-heptose from D-glycero-beta-D-manno-heptose 7-phosphate: step 3/4. Functionally, catalyzes the phosphorylation of D-glycero-D-manno-heptose 7-phosphate at the C-1 position to selectively form D-glycero-beta-D-manno-heptose-1,7-bisphosphate. Its function is as follows. Catalyzes the ADP transfer from ATP to D-glycero-beta-D-manno-heptose 1-phosphate, yielding ADP-D-glycero-beta-D-manno-heptose. This chain is Bifunctional protein HldE, found in Helicobacter pylori (strain HPAG1).